The chain runs to 732 residues: Acylamino-acid-releasing enzyme (732 aa).

An N-acetylmethionine modification is found at Met1. Ser185 and Ser187 each carry phosphoserine. Catalysis depends on charge relay system residues Ser587, Asp675, and His707.

Homotetramer. In terms of tissue distribution, expressed in erythrocytes (at protein level).

It is found in the cytoplasm. The enzyme catalyses Cleavage of an N-acetyl or N-formyl amino acid from the N-terminus of a polypeptide.. Its activity is regulated as follows. Homotetramerization is required for activity. Tetramerization results in the formation of a gated channel which is involved in substrate selection and substrate access to the catalytic sites. Functionally, this enzyme catalyzes the hydrolysis of the N-terminal peptide bond of an N-acetylated peptide to generate an N-acetylated amino acid and a peptide with a free N-terminus. It preferentially cleaves off Ac-Ala, Ac-Met and Ac-Ser. Also, involved in the degradation of oxidized and glycated proteins. This is Acylamino-acid-releasing enzyme (APEH) from Homo sapiens (Human).